Here is a 274-residue protein sequence, read N- to C-terminus: 2-succinyl-6-hydroxy-2,4-cyclohexadiene-1-carboxylate synthase (274 aa).

It belongs to the AB hydrolase superfamily. MenH family. In terms of assembly, monomer.

It catalyses the reaction 5-enolpyruvoyl-6-hydroxy-2-succinyl-cyclohex-3-ene-1-carboxylate = (1R,6R)-6-hydroxy-2-succinyl-cyclohexa-2,4-diene-1-carboxylate + pyruvate. It functions in the pathway quinol/quinone metabolism; 1,4-dihydroxy-2-naphthoate biosynthesis; 1,4-dihydroxy-2-naphthoate from chorismate: step 3/7. It participates in quinol/quinone metabolism; menaquinone biosynthesis. Functionally, catalyzes a proton abstraction reaction that results in 2,5-elimination of pyruvate from 2-succinyl-5-enolpyruvyl-6-hydroxy-3-cyclohexene-1-carboxylate (SEPHCHC) and the formation of 2-succinyl-6-hydroxy-2,4-cyclohexadiene-1-carboxylate (SHCHC). The protein is 2-succinyl-6-hydroxy-2,4-cyclohexadiene-1-carboxylate synthase of Yersinia enterocolitica serotype O:8 / biotype 1B (strain NCTC 13174 / 8081).